The chain runs to 549 residues: S-methyl thiourocanate hydratase (549 aa).

Residues Met49, Gly173, Met174, Gly175, Asp193, Ser198, Asn239, Ala240, Gln260, Val270, and Tyr318 each contribute to the NAD(+) site.

Belongs to the urocanase family. S-methyl thiourocanate hydratase subfamily. NAD(+) is required as a cofactor.

The catalysed reaction is S-methyl-(E)-thiourocanate + H2O = S-methyl-thiohydantoin-5-propanoate. Functionally, hydratase involved in the catabolism of S-methyl ergothioneine. Catalyzes the 1,4-addition of H(2)O to S-methyl thiourocanate, leading to the formation of S-methyl-thiohydantoin-5-propanoate, the second step in S-methyl ergothioneine degradation. Cannot use urocanate or thiourocanate as substrate. The sequence is that of S-methyl thiourocanate hydratase from Variovorax sp. (strain JCM 16519 / RA8).